A 169-amino-acid chain; its full sequence is uncharacterized protein (169 aa).

This sequence to M.tuberculosis Rv1480.

This is an uncharacterized protein from Mycobacterium avium.